A 329-amino-acid polypeptide reads, in one-letter code: 36 kDa antigen (329 aa).

Residues 11–31 (AILTGGGALLLGLIVLFYLAY) traverse the membrane as a helical segment.

Belongs to the membrane fusion protein (MFP) (TC 8.A.1) family.

Its subcellular location is the membrane. The protein is 36 kDa antigen of Helicobacter pylori (strain ATCC 700392 / 26695) (Campylobacter pylori).